A 212-amino-acid chain; its full sequence is Imidazole glycerol phosphate synthase subunit HisH (212 aa).

Residues 3 to 211 (LIAVIDYDMG…VQQVQKLALV (209 aa)) form the Glutamine amidotransferase type-1 domain. Residue cysteine 81 is the Nucleophile of the active site. Catalysis depends on residues histidine 186 and glutamate 188.

In terms of assembly, heterodimer of HisH and HisF.

It localises to the cytoplasm. It carries out the reaction 5-[(5-phospho-1-deoxy-D-ribulos-1-ylimino)methylamino]-1-(5-phospho-beta-D-ribosyl)imidazole-4-carboxamide + L-glutamine = D-erythro-1-(imidazol-4-yl)glycerol 3-phosphate + 5-amino-1-(5-phospho-beta-D-ribosyl)imidazole-4-carboxamide + L-glutamate + H(+). The enzyme catalyses L-glutamine + H2O = L-glutamate + NH4(+). The protein operates within amino-acid biosynthesis; L-histidine biosynthesis; L-histidine from 5-phospho-alpha-D-ribose 1-diphosphate: step 5/9. In terms of biological role, IGPS catalyzes the conversion of PRFAR and glutamine to IGP, AICAR and glutamate. The HisH subunit catalyzes the hydrolysis of glutamine to glutamate and ammonia as part of the synthesis of IGP and AICAR. The resulting ammonia molecule is channeled to the active site of HisF. This is Imidazole glycerol phosphate synthase subunit HisH from Microcystis aeruginosa (strain NIES-843 / IAM M-2473).